The sequence spans 91 residues: CLAVATA3/ESR (CLE)-related protein 27 (91 aa).

The signal sequence occupies residues 1-35 (MTHAREWRSSLTTTLLMVILLSYMLHLFCVYSRVG). Residues Pro83 and Pro86 each carry the hydroxyproline modification. O-linked (Ara...) hydroxyproline glycosylation occurs at Pro86.

It belongs to the CLV3/ESR signal peptide family. Post-translationally, the O-glycosylation (arabinosylation) of the hydroxyproline Pro-86 enhances binding affinity of the CLE27p peptide for its receptor. In terms of tissue distribution, mostly expressed in apex, and, to a lower extent, in roots, leaves, flowers and siliques.

The protein resides in the secreted. It is found in the extracellular space. Its function is as follows. Extracellular signal peptide that regulates cell fate. Represses root apical meristem maintenance. In Arabidopsis thaliana (Mouse-ear cress), this protein is CLAVATA3/ESR (CLE)-related protein 27.